Here is a 473-residue protein sequence, read N- to C-terminus: Mitochondrial distribution and morphology protein 10 (473 aa).

The protein belongs to the MDM10 family. In terms of assembly, component of the ER-mitochondria encounter structure (ERMES) or MDM complex, composed of MMM1, MDM10, MDM12 and MDM34. Associates with the mitochondrial outer membrane sorting assembly machinery SAM(core) complex.

It is found in the mitochondrion outer membrane. In terms of biological role, component of the ERMES/MDM complex, which serves as a molecular tether to connect the endoplasmic reticulum and mitochondria. Components of this complex are involved in the control of mitochondrial shape and protein biogenesis and may function in phospholipid exchange. MDM10 is involved in the late assembly steps of the general translocase of the mitochondrial outer membrane (TOM complex). Functions in the TOM40-specific route of the assembly of outer membrane beta-barrel proteins, including the association of TOM40 with the receptor TOM22 and small TOM proteins. Can associate with the SAM(core) complex as well as the MDM12-MMM1 complex, both involved in late steps of the major beta-barrel assembly pathway, that is responsible for biogenesis of all outer membrane beta-barrel proteins. May act as a switch that shuttles between both complexes and channels precursor proteins into the TOM40-specific pathway. Plays a role in mitochondrial morphology and in the inheritance of mitochondria. The sequence is that of Mitochondrial distribution and morphology protein 10 from Candida albicans (strain SC5314 / ATCC MYA-2876) (Yeast).